The primary structure comprises 261 residues: Cytochrome c oxidase subunit 3 (261 aa).

Residues 1 to 15 (MTHQTHSYHMVNPSP) lie on the Mitochondrial matrix side of the membrane. The chain crosses the membrane as a helical span at residues 16–34 (WPLTGALSALLMTSGLIMW). At 35-40 (FHFNSM) the chain is on the mitochondrial intermembrane side. The chain crosses the membrane as a helical span at residues 41-66 (ILLTLGLSTNILTMYQWWRDIIREST). Residues 67–72 (FQGHHT) are Mitochondrial matrix-facing. Residues 73 to 105 (PTVQKGLRYGMILFIVSEVLFFTGFFWAFYHSS) form a helical membrane-spanning segment. The Mitochondrial intermembrane portion of the chain corresponds to 106-128 (LAPTPELGGCWPPTGIHPLNPLE). Residues 129-152 (VPLLNTSVLLASGVSITWAHHSLM) traverse the membrane as a helical segment. The Mitochondrial matrix segment spans residues 153–155 (EGN). A helical transmembrane segment spans residues 156-183 (RKHMLQALFITIALGLYFTLLQASEYYE). The Mitochondrial intermembrane segment spans residues 184–190 (APFTISD). A helical transmembrane segment spans residues 191–223 (GIYGSTFFVATGFHGLHVIIGSTFLIVCFLRQV). Residues 224 to 232 (KFHFTSNHH) are Mitochondrial matrix-facing. The helical transmembrane segment at 233–256 (FGFERAAWYWHFVDVVWLFLYVSI) threads the bilayer. Residues 257–261 (YWWGS) are Mitochondrial intermembrane-facing.

The protein belongs to the cytochrome c oxidase subunit 3 family. Component of the cytochrome c oxidase (complex IV, CIV), a multisubunit enzyme composed of 14 subunits. The complex is composed of a catalytic core of 3 subunits MT-CO1, MT-CO2 and MT-CO3, encoded in the mitochondrial DNA, and 11 supernumerary subunits COX4I, COX5A, COX5B, COX6A, COX6B, COX6C, COX7A, COX7B, COX7C, COX8 and NDUFA4, which are encoded in the nuclear genome. The complex exists as a monomer or a dimer and forms supercomplexes (SCs) in the inner mitochondrial membrane with NADH-ubiquinone oxidoreductase (complex I, CI) and ubiquinol-cytochrome c oxidoreductase (cytochrome b-c1 complex, complex III, CIII), resulting in different assemblies (supercomplex SCI(1)III(2)IV(1) and megacomplex MCI(2)III(2)IV(2)).

The protein localises to the mitochondrion inner membrane. The catalysed reaction is 4 Fe(II)-[cytochrome c] + O2 + 8 H(+)(in) = 4 Fe(III)-[cytochrome c] + 2 H2O + 4 H(+)(out). Its function is as follows. Component of the cytochrome c oxidase, the last enzyme in the mitochondrial electron transport chain which drives oxidative phosphorylation. The respiratory chain contains 3 multisubunit complexes succinate dehydrogenase (complex II, CII), ubiquinol-cytochrome c oxidoreductase (cytochrome b-c1 complex, complex III, CIII) and cytochrome c oxidase (complex IV, CIV), that cooperate to transfer electrons derived from NADH and succinate to molecular oxygen, creating an electrochemical gradient over the inner membrane that drives transmembrane transport and the ATP synthase. Cytochrome c oxidase is the component of the respiratory chain that catalyzes the reduction of oxygen to water. Electrons originating from reduced cytochrome c in the intermembrane space (IMS) are transferred via the dinuclear copper A center (CU(A)) of subunit 2 and heme A of subunit 1 to the active site in subunit 1, a binuclear center (BNC) formed by heme A3 and copper B (CU(B)). The BNC reduces molecular oxygen to 2 water molecules using 4 electrons from cytochrome c in the IMS and 4 protons from the mitochondrial matrix. The polypeptide is Cytochrome c oxidase subunit 3 (MT-CO3) (Balaenoptera musculus (Blue whale)).